The primary structure comprises 243 residues: Phosphatidylserine decarboxylase proenzyme (243 aa).

Catalysis depends on serine 212, which acts as the Schiff-base intermediate with substrate; via pyruvic acid. A Pyruvic acid (Ser); by autocatalysis modification is found at serine 212.

Belongs to the phosphatidylserine decarboxylase family. PSD-A subfamily. As to quaternary structure, heterodimer of a large membrane-associated beta subunit and a small pyruvoyl-containing alpha subunit. The cofactor is pyruvate. In terms of processing, is synthesized initially as an inactive proenzyme. Formation of the active enzyme involves a self-maturation process in which the active site pyruvoyl group is generated from an internal serine residue via an autocatalytic post-translational modification. Two non-identical subunits are generated from the proenzyme in this reaction, and the pyruvate is formed at the N-terminus of the alpha chain, which is derived from the carboxyl end of the proenzyme. The post-translation cleavage follows an unusual pathway, termed non-hydrolytic serinolysis, in which the side chain hydroxyl group of the serine supplies its oxygen atom to form the C-terminus of the beta chain, while the remainder of the serine residue undergoes an oxidative deamination to produce ammonia and the pyruvoyl prosthetic group on the alpha chain.

The protein localises to the cell membrane. It catalyses the reaction a 1,2-diacyl-sn-glycero-3-phospho-L-serine + H(+) = a 1,2-diacyl-sn-glycero-3-phosphoethanolamine + CO2. It functions in the pathway phospholipid metabolism; phosphatidylethanolamine biosynthesis; phosphatidylethanolamine from CDP-diacylglycerol: step 2/2. In terms of biological role, catalyzes the formation of phosphatidylethanolamine (PtdEtn) from phosphatidylserine (PtdSer). This chain is Phosphatidylserine decarboxylase proenzyme, found in Mycobacterium leprae (strain Br4923).